We begin with the raw amino-acid sequence, 581 residues long: Proline--tRNA ligase (581 aa).

This sequence belongs to the class-II aminoacyl-tRNA synthetase family. ProS type 1 subfamily. In terms of assembly, homodimer.

The protein resides in the cytoplasm. It catalyses the reaction tRNA(Pro) + L-proline + ATP = L-prolyl-tRNA(Pro) + AMP + diphosphate. In terms of biological role, catalyzes the attachment of proline to tRNA(Pro) in a two-step reaction: proline is first activated by ATP to form Pro-AMP and then transferred to the acceptor end of tRNA(Pro). As ProRS can inadvertently accommodate and process non-cognate amino acids such as alanine and cysteine, to avoid such errors it has two additional distinct editing activities against alanine. One activity is designated as 'pretransfer' editing and involves the tRNA(Pro)-independent hydrolysis of activated Ala-AMP. The other activity is designated 'posttransfer' editing and involves deacylation of mischarged Ala-tRNA(Pro). The misacylated Cys-tRNA(Pro) is not edited by ProRS. The protein is Proline--tRNA ligase of Polaromonas naphthalenivorans (strain CJ2).